The following is a 552-amino-acid chain: Phosphoglucomutase (552 aa).

The active-site Phosphoserine intermediate is serine 143. The Mg(2+) site is built by serine 143, aspartate 295, aspartate 297, and aspartate 299.

This sequence belongs to the phosphohexose mutase family. Mg(2+) is required as a cofactor.

It carries out the reaction alpha-D-glucose 1-phosphate = alpha-D-glucose 6-phosphate. It functions in the pathway glycolipid metabolism; diglucosyl-diacylglycerol biosynthesis. In terms of biological role, catalyzes the interconversion between glucose-6-phosphate and alpha-glucose-1-phosphate. This is the first step in the biosynthesis of diglucosyl-diacylglycerol (Glc2-DAG), i.e. the predominant glycolipid found in the S.aureus membrane, which is also used as a membrane anchor for lipoteichoic acid (LTA). The protein is Phosphoglucomutase (pgcA) of Staphylococcus aureus (strain MSSA476).